Consider the following 389-residue polypeptide: Chalcone synthase J (389 aa).

Cys164 is an active-site residue.

It belongs to the thiolase-like superfamily. Chalcone/stilbene synthases family.

The enzyme catalyses (E)-4-coumaroyl-CoA + 3 malonyl-CoA + 3 H(+) = 2',4,4',6'-tetrahydroxychalcone + 3 CO2 + 4 CoA. It functions in the pathway secondary metabolite biosynthesis; flavonoid biosynthesis. In terms of biological role, the primary product of this enzyme is 4,2',4',6'-tetrahydroxychalcone (also termed naringenin-chalcone or chalcone) which can under specific conditions spontaneously isomerize into naringenin. This chain is Chalcone synthase J (CHSJ), found in Petunia hybrida (Petunia).